Here is a 730-residue protein sequence, read N- to C-terminus: Elongation factor 2 (730 aa).

Residues 19–260 (KFIRNIGIVA…MVVKHLPDPF (242 aa)) enclose the tr-type G domain. GTP contacts are provided by residues 28-35 (AHIDHGKT), 94-98 (DTPGH), and 148-151 (NKVD). A Diphthamide modification is found at His-597.

It belongs to the TRAFAC class translation factor GTPase superfamily. Classic translation factor GTPase family. EF-G/EF-2 subfamily.

It localises to the cytoplasm. Catalyzes the GTP-dependent ribosomal translocation step during translation elongation. During this step, the ribosome changes from the pre-translocational (PRE) to the post-translocational (POST) state as the newly formed A-site-bound peptidyl-tRNA and P-site-bound deacylated tRNA move to the P and E sites, respectively. Catalyzes the coordinated movement of the two tRNA molecules, the mRNA and conformational changes in the ribosome. The sequence is that of Elongation factor 2 from Methanosphaerula palustris (strain ATCC BAA-1556 / DSM 19958 / E1-9c).